Here is a 494-residue protein sequence, read N- to C-terminus: Probable malate:quinone oxidoreductase (494 aa).

The protein belongs to the MQO family. FAD serves as cofactor.

The enzyme catalyses (S)-malate + a quinone = a quinol + oxaloacetate. It participates in carbohydrate metabolism; tricarboxylic acid cycle; oxaloacetate from (S)-malate (quinone route): step 1/1. This is Probable malate:quinone oxidoreductase from Kocuria rhizophila (strain ATCC 9341 / DSM 348 / NBRC 103217 / DC2201).